Reading from the N-terminus, the 196-residue chain is GTP cyclohydrolase 1 (196 aa).

Zn(2+)-binding residues include Cys-86, His-89, and Cys-158.

Belongs to the GTP cyclohydrolase I family. As to quaternary structure, homomer.

It carries out the reaction GTP + H2O = 7,8-dihydroneopterin 3'-triphosphate + formate + H(+). Its pathway is cofactor biosynthesis; 7,8-dihydroneopterin triphosphate biosynthesis; 7,8-dihydroneopterin triphosphate from GTP: step 1/1. The polypeptide is GTP cyclohydrolase 1 (Clostridium botulinum (strain Loch Maree / Type A3)).